The primary structure comprises 614 residues: Methionine--tRNA ligase (614 aa).

The short motif at Pro-11–His-21 is the 'HIGH' region element. Cys-143, Cys-146, Cys-156, and Cys-159 together coordinate Zn(2+). Residues Gln-359–Ser-363 carry the 'KMSKS' region motif. Position 362 (Thr-362) interacts with ATP.

This sequence belongs to the class-I aminoacyl-tRNA synthetase family. MetG type 1 subfamily. Monomer. Requires Zn(2+) as cofactor.

The protein resides in the cytoplasm. The catalysed reaction is tRNA(Met) + L-methionine + ATP = L-methionyl-tRNA(Met) + AMP + diphosphate. In terms of biological role, is required not only for elongation of protein synthesis but also for the initiation of all mRNA translation through initiator tRNA(fMet) aminoacylation. In Beutenbergia cavernae (strain ATCC BAA-8 / DSM 12333 / CCUG 43141 / JCM 11478 / NBRC 16432 / NCIMB 13614 / HKI 0122), this protein is Methionine--tRNA ligase.